A 297-amino-acid polypeptide reads, in one-letter code: Counting factor 45-1 (297 aa).

A signal peptide spans 1–20 (MNKLISLLLVCLVAIALVNA). The region spanning 24–235 (IDFDSDTVNS…SASTGSGSGS (212 aa)) is the Ch-type lysozyme domain. Residues aspartate 29, aspartate 119, and glutamate 121 contribute to the active site. Asparagine 166 carries an N-linked (GlcNAc...) asparagine glycan. The interval 231–296 (SGSGSSSGSS…GSSSGSGSGS (66 aa)) is S-G-S motif repeats. Residues 231–297 (SGSGSSSGSS…SSSGSGSGSS (67 aa)) form a disordered region. A compositionally biased stretch (low complexity) spans 234–275 (GSSSGSSSGSSSGSSSGSGSSSGSGSSSGSSSGSGSGSSSSG). Residues 276-297 (SGSGSGSSSGSGSSSGSGSGSS) show a composition bias toward gly residues.

It belongs to the glycosyl hydrolase 25 family. As to quaternary structure, monomer. Component of the counting factor (CF) complex, which includes cf60, cf50, cf45-1 and ctnA.

It localises to the secreted. Functionally, cell-counting factor that limits the maximum size of the multicellular structure during aggregation. The protein is Counting factor 45-1 (cf45-1) of Dictyostelium discoideum (Social amoeba).